The sequence spans 93 residues: Small ribosomal subunit protein uS19c (93 aa).

Belongs to the universal ribosomal protein uS19 family.

Its subcellular location is the plastid. It localises to the chloroplast. Its function is as follows. Protein S19 forms a complex with S13 that binds strongly to the 16S ribosomal RNA. The chain is Small ribosomal subunit protein uS19c from Stigeoclonium helveticum (Green alga).